The chain runs to 625 residues: Chaperone protein HtpG (625 aa).

The a; substrate-binding stretch occupies residues 1-337; sequence MSTNQETRGF…TNDLPLNVSR (337 aa). Positions 338 to 554 are b; sequence EILQENKITA…NDEMTTQMAK (217 aa). A c region spans residues 555–625; the sequence is LFAAMGQKAP…FIKRMNKLLG (71 aa).

It belongs to the heat shock protein 90 family. In terms of assembly, homodimer.

It is found in the cytoplasm. Molecular chaperone. Has ATPase activity. In Actinobacillus pleuropneumoniae serotype 5b (strain L20), this protein is Chaperone protein HtpG.